The chain runs to 515 residues: Protein DETOXIFICATION 32 (515 aa).

The span at M1–T26 shows a compositional bias: basic and acidic residues. The interval M1 to P30 is disordered. 12 helical membrane-spanning segments follow: residues L48–V68, V90–C110, I131–L151, F167–F187, V194–L214, G225–I245, A276–L296, V303–F323, L347–V367, L392–G412, I418–L438, and G448–I468. The span at G488 to I497 shows a compositional bias: basic and acidic residues. The tract at residues G488–K515 is disordered. The span at N506–K515 shows a compositional bias: low complexity.

The protein belongs to the multi antimicrobial extrusion (MATE) (TC 2.A.66.1) family.

Its subcellular location is the membrane. The chain is Protein DETOXIFICATION 32 from Arabidopsis thaliana (Mouse-ear cress).